Here is a 337-residue protein sequence, read N- to C-terminus: Biotin synthase 1 (337 aa).

Residues 1–23 (MSSVLTQPLAFHPPRPAVQPREH) form a disordered region. The region spanning 57–284 (TRVEFATLLS…TARVRLSAGR (228 aa)) is the Radical SAM core domain. 3 residues coordinate [4Fe-4S] cluster: cysteine 72, cysteine 76, and cysteine 79. Positions 116, 147, 207, and 279 each coordinate [2Fe-2S] cluster.

The protein belongs to the radical SAM superfamily. Biotin synthase family. In terms of assembly, homodimer. The cofactor is [4Fe-4S] cluster. [2Fe-2S] cluster is required as a cofactor.

It catalyses the reaction (4R,5S)-dethiobiotin + (sulfur carrier)-SH + 2 reduced [2Fe-2S]-[ferredoxin] + 2 S-adenosyl-L-methionine = (sulfur carrier)-H + biotin + 2 5'-deoxyadenosine + 2 L-methionine + 2 oxidized [2Fe-2S]-[ferredoxin]. It participates in cofactor biosynthesis; biotin biosynthesis; biotin from 7,8-diaminononanoate: step 2/2. In terms of biological role, catalyzes the conversion of dethiobiotin (DTB) to biotin by the insertion of a sulfur atom into dethiobiotin via a radical-based mechanism. The polypeptide is Biotin synthase 1 (Polaromonas sp. (strain JS666 / ATCC BAA-500)).